The primary structure comprises 447 residues: N-succinylarginine dihydrolase (447 aa).

Substrate contacts are provided by residues 19–28 (AGLSFGNKAS), N110, and 137–138 (HR). E174 is a catalytic residue. Residue R212 coordinates substrate. H248 is an active-site residue. The substrate site is built by D250 and N359. Residue C365 is the Nucleophile of the active site.

This sequence belongs to the succinylarginine dihydrolase family. As to quaternary structure, homodimer.

It catalyses the reaction N(2)-succinyl-L-arginine + 2 H2O + 2 H(+) = N(2)-succinyl-L-ornithine + 2 NH4(+) + CO2. It functions in the pathway amino-acid degradation; L-arginine degradation via AST pathway; L-glutamate and succinate from L-arginine: step 2/5. Catalyzes the hydrolysis of N(2)-succinylarginine into N(2)-succinylornithine, ammonia and CO(2). The protein is N-succinylarginine dihydrolase of Escherichia coli O157:H7.